The primary structure comprises 456 residues: Exodeoxyribonuclease 7 large subunit (456 aa).

This sequence belongs to the XseA family. In terms of assembly, heterooligomer composed of large and small subunits.

It localises to the cytoplasm. It catalyses the reaction Exonucleolytic cleavage in either 5'- to 3'- or 3'- to 5'-direction to yield nucleoside 5'-phosphates.. Functionally, bidirectionally degrades single-stranded DNA into large acid-insoluble oligonucleotides, which are then degraded further into small acid-soluble oligonucleotides. In Lactobacillus gasseri (strain ATCC 33323 / DSM 20243 / BCRC 14619 / CIP 102991 / JCM 1131 / KCTC 3163 / NCIMB 11718 / NCTC 13722 / AM63), this protein is Exodeoxyribonuclease 7 large subunit.